A 467-amino-acid chain; its full sequence is F-box protein pof9 (467 aa).

The 47-residue stretch at 3 to 49 (KSPFLELSYDILLEISTYLDYKDIVHLSETCKSLSYVFDDKTIWHRF) folds into the F-box domain. 3 RCC1 repeats span residues 77–131 (RGYA…LLNE), 302–354 (ETFT…YLTS), and 355–417 (DHSI…AAGG).

In terms of assembly, interacts with skp1.

Its subcellular location is the cytoplasm. The protein localises to the nucleus. This chain is F-box protein pof9 (pof9), found in Schizosaccharomyces pombe (strain 972 / ATCC 24843) (Fission yeast).